We begin with the raw amino-acid sequence, 181 residues long: Ferredoxin C 2, chloroplastic (181 aa).

The transit peptide at 1–44 (MALILPCTFCTSLQKKNFPINRRYITNFRRGATTATCEFRIPVE) directs the protein to the chloroplast. The region spanning 59–151 (HKVTVHDRQR…DLEVETQDED (93 aa)) is the 2Fe-2S ferredoxin-type domain. 4 residues coordinate [2Fe-2S] cluster: C97, C102, C105, and C135.

This sequence belongs to the 2Fe2S plant-type ferredoxin family. [2Fe-2S] cluster serves as cofactor.

It localises to the plastid. The protein localises to the chloroplast. Functionally, ferredoxins are iron-sulfur proteins that transfer electrons in a wide variety of metabolic reactions. Mediates alternative electron partitioning in conditions of acceptor limitation at photosystem I. This Arabidopsis thaliana (Mouse-ear cress) protein is Ferredoxin C 2, chloroplastic.